Here is a 164-residue protein sequence, read N- to C-terminus: Lipoprotein signal peptidase (164 aa).

4 helical membrane passes run 6–26, 39–59, 65–85, and 88–108; these read LGVLAGIVALVLDQVTKLWLL, VLPFFDLVLAWNTGISYGWFS, GQILMLAFKAVAIVALAIWMA, and TTKLATIGLGLIIGGAIGNAI. Residues Asp118 and Asp140 contribute to the active site. Residues 141–161 traverse the membrane as a helical segment; it reads VAIVVGVAALLYDSLIGLPAA.

This sequence belongs to the peptidase A8 family.

Its subcellular location is the cell inner membrane. It carries out the reaction Release of signal peptides from bacterial membrane prolipoproteins. Hydrolyzes -Xaa-Yaa-Zaa-|-(S,diacylglyceryl)Cys-, in which Xaa is hydrophobic (preferably Leu), and Yaa (Ala or Ser) and Zaa (Gly or Ala) have small, neutral side chains.. It participates in protein modification; lipoprotein biosynthesis (signal peptide cleavage). Functionally, this protein specifically catalyzes the removal of signal peptides from prolipoproteins. The protein is Lipoprotein signal peptidase of Rhodopseudomonas palustris (strain ATCC BAA-98 / CGA009).